Consider the following 737-residue polypeptide: Ribosome-releasing factor 2, mitochondrial (737 aa).

A mitochondrion-targeting transit peptide spans 1 to 36 (MLCNRLHKAAFAARLRPRLPATVASCRQVHNSDGTI). One can recognise a tr-type G domain in the interval 39-318 (KRIRNIGILA…SVLNFLPAPS (280 aa)). Residues 48 to 55 (AHIDAGKT), 112 to 116 (DTPGH), and 166 to 169 (NKMD) each bind GTP.

The protein belongs to the TRAFAC class translation factor GTPase superfamily. Classic translation factor GTPase family. EF-G/EF-2 subfamily.

It localises to the mitochondrion. Its function is as follows. Mitochondrial GTPase that mediates the disassembly of ribosomes from messenger RNA at the termination of mitochondrial protein biosynthesis. Not involved in the GTP-dependent ribosomal translocation step during translation elongation. This Anopheles gambiae (African malaria mosquito) protein is Ribosome-releasing factor 2, mitochondrial.